The following is a 321-amino-acid chain: Tetraacyldisaccharide 4'-kinase (321 aa).

Residue 54–61 participates in ATP binding; sequence SVGGTGKT.

Belongs to the LpxK family.

It catalyses the reaction a lipid A disaccharide + ATP = a lipid IVA + ADP + H(+). Its pathway is glycolipid biosynthesis; lipid IV(A) biosynthesis; lipid IV(A) from (3R)-3-hydroxytetradecanoyl-[acyl-carrier-protein] and UDP-N-acetyl-alpha-D-glucosamine: step 6/6. Functionally, transfers the gamma-phosphate of ATP to the 4'-position of a tetraacyldisaccharide 1-phosphate intermediate (termed DS-1-P) to form tetraacyldisaccharide 1,4'-bis-phosphate (lipid IVA). The sequence is that of Tetraacyldisaccharide 4'-kinase from Rickettsia conorii (strain ATCC VR-613 / Malish 7).